We begin with the raw amino-acid sequence, 237 residues long: Phosphatidylserine decarboxylase proenzyme (237 aa).

S206 functions as the Schiff-base intermediate with substrate; via pyruvic acid in the catalytic mechanism. The residue at position 206 (S206) is a Pyruvic acid (Ser); by autocatalysis.

Belongs to the phosphatidylserine decarboxylase family. PSD-A subfamily. In terms of assembly, heterodimer of a large membrane-associated beta subunit and a small pyruvoyl-containing alpha subunit. Pyruvate serves as cofactor. In terms of processing, is synthesized initially as an inactive proenzyme. Formation of the active enzyme involves a self-maturation process in which the active site pyruvoyl group is generated from an internal serine residue via an autocatalytic post-translational modification. Two non-identical subunits are generated from the proenzyme in this reaction, and the pyruvate is formed at the N-terminus of the alpha chain, which is derived from the carboxyl end of the proenzyme. The post-translation cleavage follows an unusual pathway, termed non-hydrolytic serinolysis, in which the side chain hydroxyl group of the serine supplies its oxygen atom to form the C-terminus of the beta chain, while the remainder of the serine residue undergoes an oxidative deamination to produce ammonia and the pyruvoyl prosthetic group on the alpha chain.

The protein localises to the cell membrane. It catalyses the reaction a 1,2-diacyl-sn-glycero-3-phospho-L-serine + H(+) = a 1,2-diacyl-sn-glycero-3-phosphoethanolamine + CO2. The protein operates within phospholipid metabolism; phosphatidylethanolamine biosynthesis; phosphatidylethanolamine from CDP-diacylglycerol: step 2/2. Functionally, catalyzes the formation of phosphatidylethanolamine (PtdEtn) from phosphatidylserine (PtdSer). The polypeptide is Phosphatidylserine decarboxylase proenzyme (Rhodococcus opacus (strain B4)).